Here is a 155-residue protein sequence, read N- to C-terminus: SsrA-binding protein (155 aa).

The protein belongs to the SmpB family.

It localises to the cytoplasm. Its function is as follows. Required for rescue of stalled ribosomes mediated by trans-translation. Binds to transfer-messenger RNA (tmRNA), required for stable association of tmRNA with ribosomes. tmRNA and SmpB together mimic tRNA shape, replacing the anticodon stem-loop with SmpB. tmRNA is encoded by the ssrA gene; the 2 termini fold to resemble tRNA(Ala) and it encodes a 'tag peptide', a short internal open reading frame. During trans-translation Ala-aminoacylated tmRNA acts like a tRNA, entering the A-site of stalled ribosomes, displacing the stalled mRNA. The ribosome then switches to translate the ORF on the tmRNA; the nascent peptide is terminated with the 'tag peptide' encoded by the tmRNA and targeted for degradation. The ribosome is freed to recommence translation, which seems to be the essential function of trans-translation. This is SsrA-binding protein from Geobacillus sp. (strain WCH70).